Here is a 185-residue protein sequence, read N- to C-terminus: MAEEKQTPRMKTRYFEVIRKTLQEKFNYKNAMQIPRVDKVVVNMGIGEATIDSKRPSLAAEDLGLITGQKAVVTRARNSIATFKVREGMPLGAKVTLRKDRMFEFLDRLVTIALPRVRDFRGLNPKSFDGRGNFAMGIKEHIVFPEINYDKVDQIWGMDIIVCTTAKTDDEARELLRAFNFPFRS.

The protein belongs to the universal ribosomal protein uL5 family. Part of the 50S ribosomal subunit; part of the 5S rRNA/L5/L18/L25 subcomplex. Contacts the 5S rRNA and the P site tRNA. Forms a bridge to the 30S subunit in the 70S ribosome.

Functionally, this is one of the proteins that bind and probably mediate the attachment of the 5S RNA into the large ribosomal subunit, where it forms part of the central protuberance. In the 70S ribosome it contacts protein S13 of the 30S subunit (bridge B1b), connecting the 2 subunits; this bridge is implicated in subunit movement. Contacts the P site tRNA; the 5S rRNA and some of its associated proteins might help stabilize positioning of ribosome-bound tRNAs. The sequence is that of Large ribosomal subunit protein uL5 from Bartonella quintana (strain Toulouse) (Rochalimaea quintana).